The following is a 520-amino-acid chain: Amine oxidase [flavin-containing] B (520 aa).

An N-acetylserine modification is found at Ser-2. The Cytoplasmic segment spans residues 2-489 (SSKCDVVVVG…TFLQRHLPSV (488 aa)). An N6-acetyllysine modification is found at Lys-52. S-8alpha-FAD cysteine is present on Cys-397. A helical; Anchor for type IV membrane protein transmembrane segment spans residues 490–516 (PGLLKLIGLTTIFSATALGFLAHKRGL). At 517 to 520 (LVRI) the chain is on the mitochondrial intermembrane side.

Monomer, homo- or heterodimer (containing two subunits of similar size). Each subunit contains a covalently bound flavin. Enzymatically active as monomer. FAD serves as cofactor.

It localises to the mitochondrion outer membrane. The catalysed reaction is a secondary aliphatic amine + O2 + H2O = a primary amine + an aldehyde + H2O2. The enzyme catalyses a primary methyl amine + O2 + H2O = an aldehyde + H2O2 + NH4(+). It catalyses the reaction benzylamine + O2 + H2O = benzaldehyde + H2O2 + NH4(+). It carries out the reaction (R)-adrenaline + O2 + H2O = (R)-3,4-dihydroxymandelaldehyde + methylamine + H2O2. The catalysed reaction is dopamine + O2 + H2O = 3,4-dihydroxyphenylacetaldehyde + H2O2 + NH4(+). The enzyme catalyses tyramine + O2 + H2O = (4-hydroxyphenyl)acetaldehyde + H2O2 + NH4(+). It catalyses the reaction (R)-noradrenaline + O2 + H2O = (R)-3,4-dihydroxymandelaldehyde + H2O2 + NH4(+). It carries out the reaction 2-phenylethylamine + O2 + H2O = 2-phenylacetaldehyde + H2O2 + NH4(+). The catalysed reaction is N-acetylputrescine + O2 + H2O = 4-acetamidobutanal + H2O2 + NH4(+). In terms of biological role, catalyzes the oxidative deamination of primary and some secondary amines such as neurotransmitters, and exogenous amines including the tertiary amine, neurotoxin 1-methyl-4-phenyl-1,2,3,6-tetrahydropyridine (MPTP), with concomitant reduction of oxygen to hydrogen peroxide and participates in the metabolism of neuroactive and vasoactive amines in the central nervous system and peripheral tissues. Preferentially degrades benzylamine and phenylethylamine. The chain is Amine oxidase [flavin-containing] B from Bos taurus (Bovine).